A 230-amino-acid polypeptide reads, in one-letter code: Sugar fermentation stimulation protein homolog (230 aa).

This sequence belongs to the SfsA family.

This chain is Sugar fermentation stimulation protein homolog, found in Clostridium perfringens (strain SM101 / Type A).